The primary structure comprises 189 residues: dCTP deaminase (189 aa).

DCTP-binding positions include 112-117 (KSTYAR), 136-138 (TLE), Gln-157, Tyr-171, and Gln-181. The active-site Proton donor/acceptor is the Glu-138.

The protein belongs to the dCTP deaminase family. As to quaternary structure, homotrimer.

It carries out the reaction dCTP + H2O + H(+) = dUTP + NH4(+). The protein operates within pyrimidine metabolism; dUMP biosynthesis; dUMP from dCTP (dUTP route): step 1/2. Catalyzes the deamination of dCTP to dUTP. The sequence is that of dCTP deaminase from Xanthomonas euvesicatoria pv. vesicatoria (strain 85-10) (Xanthomonas campestris pv. vesicatoria).